The following is a 239-amino-acid chain: MLVIPAIDLQSGRCVRLKQGRFDQVTQFSVFPIERALHFAKLGAKRLHVVDLDGARSGKMQQLELICSMQKTGIPIQAGGGIRSIEQALECSNAGISQLVIGSLAITNPDLTIQIIEKIKPENIVLALDVRVDTKVPLLAINGWQNNSTSSLWEVVSYYENYGIKNILCTDIACDGMMNGPNFDLYQQAVEYFPQIAWQASGGVRHMQDITTLNSLGISAVILGLMLYQDHMNLEELLC.

The active-site Proton acceptor is D8. D129 serves as the catalytic Proton donor.

The protein belongs to the HisA/HisF family.

Its subcellular location is the cytoplasm. The catalysed reaction is 1-(5-phospho-beta-D-ribosyl)-5-[(5-phospho-beta-D-ribosylamino)methylideneamino]imidazole-4-carboxamide = 5-[(5-phospho-1-deoxy-D-ribulos-1-ylimino)methylamino]-1-(5-phospho-beta-D-ribosyl)imidazole-4-carboxamide. It functions in the pathway amino-acid biosynthesis; L-histidine biosynthesis; L-histidine from 5-phospho-alpha-D-ribose 1-diphosphate: step 4/9. The polypeptide is 1-(5-phosphoribosyl)-5-[(5-phosphoribosylamino)methylideneamino] imidazole-4-carboxamide isomerase (Legionella pneumophila subsp. pneumophila (strain Philadelphia 1 / ATCC 33152 / DSM 7513)).